Here is a 359-residue protein sequence, read N- to C-terminus: Probable deacetylase AF_0130 (359 aa).

The active-site Proton donor/acceptor is the H126. D162, H164, and D249 together coordinate Zn(2+).

It belongs to the histone deacetylase family. Requires Zn(2+) as cofactor.

Its function is as follows. Probable deacetylase. The protein is Probable deacetylase AF_0130 of Archaeoglobus fulgidus (strain ATCC 49558 / DSM 4304 / JCM 9628 / NBRC 100126 / VC-16).